The following is a 225-amino-acid chain: Uracil-DNA glycosylase (225 aa).

D65 acts as the Proton acceptor in catalysis.

Belongs to the uracil-DNA glycosylase (UDG) superfamily. UNG family.

It localises to the cytoplasm. It catalyses the reaction Hydrolyzes single-stranded DNA or mismatched double-stranded DNA and polynucleotides, releasing free uracil.. Excises uracil residues from the DNA which can arise as a result of misincorporation of dUMP residues by DNA polymerase or due to deamination of cytosine. The sequence is that of Uracil-DNA glycosylase from Anoxybacillus flavithermus (strain DSM 21510 / WK1).